Reading from the N-terminus, the 190-residue chain is Nucleoside triphosphate pyrophosphatase (190 aa).

Asp69 acts as the Proton acceptor in catalysis.

This sequence belongs to the Maf family. Requires a divalent metal cation as cofactor.

The protein localises to the cytoplasm. It catalyses the reaction a ribonucleoside 5'-triphosphate + H2O = a ribonucleoside 5'-phosphate + diphosphate + H(+). The catalysed reaction is a 2'-deoxyribonucleoside 5'-triphosphate + H2O = a 2'-deoxyribonucleoside 5'-phosphate + diphosphate + H(+). Its function is as follows. Nucleoside triphosphate pyrophosphatase. May have a dual role in cell division arrest and in preventing the incorporation of modified nucleotides into cellular nucleic acids. The sequence is that of Nucleoside triphosphate pyrophosphatase from Helicobacter pylori (strain ATCC 700392 / 26695) (Campylobacter pylori).